A 903-amino-acid chain; its full sequence is E3 ubiquitin-protein ligase DDB_G0292642 (903 aa).

Disordered regions lie at residues phenylalanine 115 to aspartate 137, leucine 167 to serine 236, valine 284 to lysine 366, threonine 415 to isoleucine 487, and aspartate 549 to glycine 576. Composition is skewed to low complexity over residues threonine 120–asparagine 130 and threonine 178–threonine 216. Residues serine 217–isoleucine 232 are compositionally biased toward acidic residues. Low complexity-rich tracts occupy residues threonine 287–threonine 301 and asparagine 311–asparagine 323. Residues asparagine 313 to asparagine 352 adopt a coiled-coil conformation. The segment covering glutamate 329–asparagine 345 has biased composition (acidic residues). The segment covering asparagine 346–asparagine 364 has biased composition (low complexity). Residues threonine 415 to asparagine 427 show a composition bias toward polar residues. Residues threonine 428–threonine 443 are compositionally biased toward low complexity. Composition is skewed to acidic residues over residues asparagine 451–isoleucine 466 and aspartate 549–serine 568. A coiled-coil region spans residues alanine 542–glutamate 569. The interval glutamate 612–glutamine 832 is TRIAD supradomain. Cysteine 616, cysteine 619, cysteine 634, histidine 636, cysteine 639, cysteine 642, cysteine 661, cysteine 666, cysteine 704, cysteine 709, cysteine 725, cysteine 728, cysteine 733, cysteine 736, histidine 741, cysteine 746, cysteine 782, and cysteine 785 together coordinate Zn(2+). The RING-type 1 zinc-finger motif lies at cysteine 616–cysteine 666. The segment at asparagine 683–cysteine 746 adopts an IBR-type zinc-finger fold. The RING-type 2; atypical zinc finger occupies cysteine 782 to cysteine 811. Residue cysteine 795 is part of the active site. Residues cysteine 800, cysteine 803, cysteine 808, cysteine 811, histidine 819, and cysteine 828 each contribute to the Zn(2+) site. Residues threonine 864 to valine 884 traverse the membrane as a helical segment.

Belongs to the RBR family. RNF14 subfamily.

The protein resides in the membrane. It carries out the reaction [E2 ubiquitin-conjugating enzyme]-S-ubiquitinyl-L-cysteine + [acceptor protein]-L-lysine = [E2 ubiquitin-conjugating enzyme]-L-cysteine + [acceptor protein]-N(6)-ubiquitinyl-L-lysine.. It functions in the pathway protein modification; protein ubiquitination. In terms of biological role, E3 ubiquitin-protein ligase. This chain is E3 ubiquitin-protein ligase DDB_G0292642, found in Dictyostelium discoideum (Social amoeba).